Reading from the N-terminus, the 281-residue chain is F-actin-capping protein subunit alpha (281 aa).

It belongs to the F-actin-capping protein alpha subunit family. In terms of assembly, component of the F-actin capping complex, composed of a heterodimer of an alpha and a beta subunit.

It localises to the cytoplasm. It is found in the cytoskeleton. F-actin-capping proteins bind in a Ca(2+)-independent manner to the fast growing ends of actin filaments (barbed end) thereby blocking the exchange of subunits at these ends. Unlike other capping proteins (such as gelsolin and severin), these proteins do not sever actin filaments. This is F-actin-capping protein subunit alpha (acpB) from Dictyostelium discoideum (Social amoeba).